The sequence spans 561 residues: ARATIQVYEETAGLMVNDPVLRTRKPLSVELGPGILGNIFDGIQRPLKTIAIKSGDVYIPRGVSVPALDKDVLWEFQPTKLGVGDVITGGDLYATVFENTLMQHHVALPPGSMGKISYIAPAGQYNLQDTVLELEFQGIKKKFTMLQTWPVRSPRPVASKLAADTPLLTGQRVLDALFPSVLGGTCAIPGAFGCGKTVISQALSKYSNSEAVVYVGCGERGNEMAEVLMDFPQLTMTLPDGREESVMKRTTLVANTSNMPVAAREASIYTGITIAEYFRDMGYNVSMMADSTSRWAEALREISGRLAEMPADSGYPAYLAARLASFYERAGKVKCLGSPDRNGSVTIVGAVSPPGGDFSDPVTSATLSIVQVFWGLDKKLAQRKHFPSVNWLISYSKYSKALESFYEKFDPDFIDIRTKAREVLQREDDLNEIVQLVGKDALAESDKITLETAKLLREDYLAQNAFTPYDKFCPFYKSVWMMRNIIHFNTLANQAVERAAGTDGHKITYSVIKHRLGDLFYRLVSQKFEDPAEGEEALVGKFKKLYDDLTTGFRNLEDEAR.

Residue 190 to 197 (GAFGCGKT) coordinates ATP.

The protein belongs to the ATPase alpha/beta chains family. As to quaternary structure, V-ATPase is a heteromultimeric enzyme composed of a peripheral catalytic V1 complex (main components: subunits A, B, C, D, E, and F) attached to an integral membrane V0 proton pore complex (main component: the proteolipid protein). High expression in the mesocotyl tip of etiolated seedlings compared to the base.

The catalysed reaction is ATP + H2O + 4 H(+)(in) = ADP + phosphate + 5 H(+)(out). Catalytic subunit of the peripheral V1 complex of vacuolar ATPase. V-ATPase vacuolar ATPase is responsible for acidifying a variety of intracellular compartments in eukaryotic cells. In Zea mays (Maize), this protein is V-type proton ATPase catalytic subunit A.